The primary structure comprises 132 residues: Transcription antitermination protein NusB (132 aa).

It belongs to the NusB family.

In terms of biological role, involved in transcription antitermination. Required for transcription of ribosomal RNA (rRNA) genes. Binds specifically to the boxA antiterminator sequence of the ribosomal RNA (rrn) operons. This is Transcription antitermination protein NusB from Sulfurimonas denitrificans (strain ATCC 33889 / DSM 1251) (Thiomicrospira denitrificans (strain ATCC 33889 / DSM 1251)).